The primary structure comprises 511 residues: Alpha-amylase 1A (511 aa).

An N-terminal signal peptide occupies residues 1 to 15 (MKLFWLLFTIGFCWA). Gln16 carries the pyrrolidone carboxylic acid modification. Intrachain disulfides connect Cys43–Cys101, Cys85–Cys130, and Cys156–Cys175. Residues Asn115, Arg173, and Asp182 each contribute to the Ca(2+) site. A chloride-binding site is contributed by Arg210. Catalysis depends on Asp212, which acts as the Nucleophile. Residue His216 participates in Ca(2+) binding. Residue Glu248 is the Proton donor of the active site. Chloride contacts are provided by Asn313 and Arg352. Asn365 is subject to Deamidated asparagine; partial. A disulfide bond links Cys393 and Cys399. Asn427 carries the deamidated asparagine; partial; alternate modification. N-linked (GlcNAc...) asparagine glycosylation occurs at Asn427. A disulfide bond links Cys465 and Cys477. Asn474 bears the Deamidated asparagine; partial mark. Asn476 carries N-linked (GlcNAc...) asparagine glycosylation.

This sequence belongs to the glycosyl hydrolase 13 family. In terms of assembly, monomer. The cofactor is Ca(2+). Chloride is required as a cofactor.

It localises to the secreted. It catalyses the reaction Endohydrolysis of (1-&gt;4)-alpha-D-glucosidic linkages in polysaccharides containing three or more (1-&gt;4)-alpha-linked D-glucose units.. Functionally, calcium-binding enzyme that initiates starch digestion in the oral cavity. Catalyzes the hydrolysis of internal (1-&gt;4)-alpha-D-glucosidic bonds, yielding a mixture of maltose, isomaltose, small amounts of glucose as well as small linear and branched oligosaccharides called dextrins. In Homo sapiens (Human), this protein is Alpha-amylase 1A.